The chain runs to 409 residues: Multifunctional CCA protein (409 aa).

ATP contacts are provided by glycine 8 and arginine 11. CTP-binding residues include glycine 8 and arginine 11. Mg(2+)-binding residues include glutamate 21 and aspartate 23. Residues arginine 91, arginine 137, and arginine 140 each coordinate ATP. Residues arginine 91, arginine 137, and arginine 140 each contribute to the CTP site. The 102-residue stretch at 228–329 (TGVHTLMVLT…LKALEGLDAF (102 aa)) folds into the HD domain.

This sequence belongs to the tRNA nucleotidyltransferase/poly(A) polymerase family. Bacterial CCA-adding enzyme type 1 subfamily. Monomer. Can also form homodimers and oligomers. Mg(2+) is required as a cofactor. Requires Ni(2+) as cofactor.

The enzyme catalyses a tRNA precursor + 2 CTP + ATP = a tRNA with a 3' CCA end + 3 diphosphate. It catalyses the reaction a tRNA with a 3' CCA end + 2 CTP + ATP = a tRNA with a 3' CCACCA end + 3 diphosphate. Functionally, catalyzes the addition and repair of the essential 3'-terminal CCA sequence in tRNAs without using a nucleic acid template. Adds these three nucleotides in the order of C, C, and A to the tRNA nucleotide-73, using CTP and ATP as substrates and producing inorganic pyrophosphate. tRNA 3'-terminal CCA addition is required both for tRNA processing and repair. Also involved in tRNA surveillance by mediating tandem CCA addition to generate a CCACCA at the 3' terminus of unstable tRNAs. While stable tRNAs receive only 3'-terminal CCA, unstable tRNAs are marked with CCACCA and rapidly degraded. The sequence is that of Multifunctional CCA protein from Thioalkalivibrio sulfidiphilus (strain HL-EbGR7).